A 310-amino-acid chain; its full sequence is uncharacterized protein (310 aa).

The Cytoplasmic segment spans residues 1–6; it reads MISEKA. Residues 5–69 form the PQ-loop 1 domain; the sequence is KAATALATIA…SKGNVILQVQ (65 aa). The chain crosses the membrane as a helical span at residues 7–27; that stretch reads ATALATIATVCWCVQLIPQII. The Extracellular segment spans residues 28–36; sequence YNWKKKDCT. Residues 37 to 57 form a helical membrane-spanning segment; that stretch reads GLPPLMMFLWVVSGIPFAIYF. Topologically, residues 58–61 are cytoplasmic; that stretch reads CVSK. The helical transmembrane segment at 62–82 threads the bilayer; sequence GNVILQVQPHLFMFFCSISFV. The Extracellular portion of the chain corresponds to 83–96; it reads QSCYYPPISMARSK. The helical transmembrane segment at 97-117 threads the bilayer; that stretch reads IVMIVAAIIAADVGMEVGFIL. Residues 118–131 are Cytoplasmic-facing; it reads WLRPLYEKGVKWPD. A helical membrane pass occupies residues 132-152; the sequence is LIFGISASVLLAVGLLPPYFE. Residues 138-194 form the PQ-loop 2 domain; sequence ASVLLAVGLLPPYFELAKRKGRVIGINFAFLFIDSLGAWLSIISVILGNMDIMGIIL. Over 153 to 164 the chain is Extracellular; it reads LAKRKGRVIGIN. A helical membrane pass occupies residues 165–185; that stretch reads FAFLFIDSLGAWLSIISVILG. The Cytoplasmic portion of the chain corresponds to 186–191; that stretch reads NMDIMG. The chain crosses the membrane as a helical span at residues 192-212; it reads IILYSIVAGMELGIFASHFIW. Residues 213–310 are Extracellular-facing; the sequence is WCRFRFLAKG…DPDRYSRLSV (98 aa). Phosphoserine is present on Ser-229. Asn-251 and Asn-259 each carry an N-linked (GlcNAc...) asparagine glycan.

Its subcellular location is the cell membrane. This is an uncharacterized protein from Saccharomyces cerevisiae (strain ATCC 204508 / S288c) (Baker's yeast).